A 386-amino-acid chain; its full sequence is Cytoplasmic 60S subunit biogenesis factor ZNF622 (386 aa).

Residue Ala2 is modified to N-acetylalanine. 2 U1-type zinc fingers span residues Tyr4–His28 and Thr67–His91. Positions Ala135 to Pro237 are disordered. Positions Gly165 to Pro176 are enriched in basic and acidic residues. Positions Glu194 to Glu235 are enriched in acidic residues. Ser269 is subject to Phosphoserine.

It belongs to the REI1 family. Homo- and heterodimer. Associates with pre-60S ribosomal particles. Interacts with MELK and MYBL2. Interacts with DNAJC21. Post-translationally, phosphorylated by MELK. The phosphorylation may redirect the protein to the nucleus. In terms of processing, ubiquitinated by HECTD1, leading to its degradation.

Its subcellular location is the cytoplasm. It localises to the nucleus. Pre-60S-associated cytoplasmic factor involved in the cytoplasmic maturation of the 60S subunit. This is Cytoplasmic 60S subunit biogenesis factor ZNF622 (Znf622) from Rattus norvegicus (Rat).